Here is a 727-residue protein sequence, read N- to C-terminus: Synaptic vesicle glycoprotein 2C (727 aa).

The segment at Met1–Asp57 is interaction with SYT1. At Met1 to Leu154 the chain is on the cytoplasmic side. A disordered region spans residues Val22 to Arg120. A phosphoserine mark is found at Ser75 and Ser76. Thr79 is subject to Phosphothreonine. Residues Phe155–Val175 form a helical membrane-spanning segment. The Extracellular portion of the chain corresponds to Leu176–Gly191. Residues Trp192–Ala212 traverse the membrane as a helical segment. At Asp213–Ser226 the chain is on the cytoplasmic side. The chain crosses the membrane as a helical span at residues Val227–Cys247. A topological domain (extracellular) is located at residue Arg248. Residues Leu249–Val269 traverse the membrane as a helical segment. Residues Leu270–Ser280 are Cytoplasmic-facing. The helical transmembrane segment at Trp281 to Ile301 threads the bilayer. Over Pro302–Arg320 the chain is Extracellular. Residues Val321–Pro341 form a helical membrane-spanning segment. Residues Glu342 to Thr437 are Cytoplasmic-facing. A helical transmembrane segment spans residues Ile438 to Ile458. Topologically, residues Lys459–Ser578 are extracellular. At Tyr466 the chain carries Phosphotyrosine. N-linked (GlcNAc...) asparagine glycosylation is found at Asn480, Asn484, Asn534, Asn559, and Asn565. A (Microbial infection) C.botulinum neurotoxin type A-binding region spans residues Asn529 to Lys566. Residues Ala579–Val599 traverse the membrane as a helical segment. The Cytoplasmic segment spans residues Ser600–Arg609. Residues Leu610–Gly630 traverse the membrane as a helical segment. Over Thr631–Met636 the chain is Extracellular. Residues Ile637–Val657 traverse the membrane as a helical segment. Over Thr658–Gly670 the chain is Cytoplasmic. The helical transmembrane segment at Phe671 to Val693 threads the bilayer. Topologically, residues Ser694–Lys697 are extracellular. The helical transmembrane segment at Ala698–Leu716 threads the bilayer. Residues Arg717–Met727 lie on the Cytoplasmic side of the membrane.

It belongs to the major facilitator superfamily. Interacts with SYT1 in a calcium-dependent manner. As to quaternary structure, (Microbial infection) Interacts with C.botulinum neurotoxin type A (BoNT/A, botA). In terms of assembly, (Microbial infection) Interacts with C.botulinum neurotoxin type F (BoNT/F). Interaction requires glycosylation of SV2 proteins. N-glycosylated. In terms of tissue distribution, expressed at high levels in very few brain areas including the striatum, midbrain and hindbrain, and in the olfactory bulb. Expressed at lower levels in cerebrum, hippocampus and cerebellum (at protein level). Mainly expressed in brain; also detected in lung, liver, kidney.

It localises to the cytoplasmic vesicle. Its subcellular location is the secretory vesicle. The protein resides in the synaptic vesicle membrane. Functionally, plays a role in the control of regulated secretion in neural and endocrine cells, enhancing selectively low-frequency neurotransmission. Positively regulates vesicle fusion by maintaining the readily releasable pool of secretory vesicles. In terms of biological role, (Microbial infection) Receptor for C.botulinum neurotoxin type A (BoNT/A, botA); the toxin binds Sv2c via extracellular loop 4. Restores uptake of BoNT/A in rat cells that are deleted for SV2 receptor. Its function is as follows. (Microbial infection) Possible receptor for C.botulinum neurotoxin type D (BoNT/D, botD); BoNT/D does not bind to extracellular loop 4 as do BoNT/A and BoNT/E. Another group does not find a convincing interaction with SV2. (Microbial infection) Receptor for C.botulinum neurotoxin type F (BoNT/F); binding requires glycosylation of Asn-573. The polypeptide is Synaptic vesicle glycoprotein 2C (Sv2c) (Rattus norvegicus (Rat)).